Consider the following 124-residue polypeptide: Small ribosomal subunit protein uS13 (124 aa).

A compositionally biased stretch (basic residues) spans 92–117 (RRGLPVRGQRTKSNARTRKGPRKTVA). The interval 92–124 (RRGLPVRGQRTKSNARTRKGPRKTVANKKIESK) is disordered.

The protein belongs to the universal ribosomal protein uS13 family. In terms of assembly, part of the 30S ribosomal subunit. Forms a loose heterodimer with protein S19. Forms two bridges to the 50S subunit in the 70S ribosome.

Its function is as follows. Located at the top of the head of the 30S subunit, it contacts several helices of the 16S rRNA. In the 70S ribosome it contacts the 23S rRNA (bridge B1a) and protein L5 of the 50S subunit (bridge B1b), connecting the 2 subunits; these bridges are implicated in subunit movement. Contacts the tRNAs in the A and P-sites. This Mycoplasmoides gallisepticum (strain R(low / passage 15 / clone 2)) (Mycoplasma gallisepticum) protein is Small ribosomal subunit protein uS13.